Consider the following 271-residue polypeptide: Chorismate dehydratase (271 aa).

The protein belongs to the MqnA/MqnD family. MqnA subfamily.

The enzyme catalyses chorismate = 3-[(1-carboxyvinyl)-oxy]benzoate + H2O. Its pathway is quinol/quinone metabolism; menaquinone biosynthesis. Its function is as follows. Catalyzes the dehydration of chorismate into 3-[(1-carboxyvinyl)oxy]benzoate, a step in the biosynthesis of menaquinone (MK, vitamin K2). This chain is Chorismate dehydratase, found in Thermus thermophilus (strain ATCC 27634 / DSM 579 / HB8).